The chain runs to 164 residues: MTIAFYPGSFDPMTNGHLDVLVQALNVVPKVVVGIGIHPGKVPMFSFEERAELIATSLGEAVPLRAGDVSVIAFDGLAVDAARQHGATLLVRGLRDGSDLDYEMQLAGMNRQMAPDLQTVFLPAGTASRPITATLVRQIATMGGDVSAFVPPQVSRALKSRLKT.

Ser-9 serves as a coordination point for substrate. Residues Ser-9–Phe-10 and His-17 each bind ATP. Residues Lys-41, Ala-78, and Arg-92 each contribute to the substrate site. ATP is bound by residues Gly-93 to Arg-95, Glu-103, and Ser-128 to Thr-134.

Belongs to the bacterial CoaD family. Homohexamer. The cofactor is Mg(2+).

The protein localises to the cytoplasm. The catalysed reaction is (R)-4'-phosphopantetheine + ATP + H(+) = 3'-dephospho-CoA + diphosphate. The protein operates within cofactor biosynthesis; coenzyme A biosynthesis; CoA from (R)-pantothenate: step 4/5. Functionally, reversibly transfers an adenylyl group from ATP to 4'-phosphopantetheine, yielding dephospho-CoA (dPCoA) and pyrophosphate. This chain is Phosphopantetheine adenylyltransferase, found in Allorhizobium ampelinum (strain ATCC BAA-846 / DSM 112012 / S4) (Agrobacterium vitis (strain S4)).